The following is a 641-amino-acid chain: Threonine--tRNA ligase (641 aa).

One can recognise a TGS domain in the interval 1–61 (MIKINLLNHQ…TQDGDLEILA (61 aa)). The segment at 240–538 (DHKRLNKKLD…LIEENKGVFP (299 aa)) is catalytic. Residues Cys-334, His-385, and His-515 each coordinate Zn(2+).

The protein belongs to the class-II aminoacyl-tRNA synthetase family. As to quaternary structure, homodimer. Requires Zn(2+) as cofactor.

The protein resides in the cytoplasm. The catalysed reaction is tRNA(Thr) + L-threonine + ATP = L-threonyl-tRNA(Thr) + AMP + diphosphate + H(+). Functionally, catalyzes the attachment of threonine to tRNA(Thr) in a two-step reaction: L-threonine is first activated by ATP to form Thr-AMP and then transferred to the acceptor end of tRNA(Thr). Also edits incorrectly charged L-seryl-tRNA(Thr). The sequence is that of Threonine--tRNA ligase from Phytoplasma australiense.